Reading from the N-terminus, the 373-residue chain is GDP-mannose 4,6-dehydratase (373 aa).

NADP(+) is bound by residues 10–15, 65–66, 87–91, and tyrosine 102; these read GITGQD, DL, and LGAQS. Residue threonine 134 is part of the active site. Active-site nucleophile residues include glutamate 136 and tyrosine 158. NADP(+) is bound by residues lysine 162, histidine 188, and arginine 193.

Belongs to the NAD(P)-dependent epimerase/dehydratase family. GDP-mannose 4,6-dehydratase subfamily. The cofactor is NADP(+).

It carries out the reaction GDP-alpha-D-mannose = GDP-4-dehydro-alpha-D-rhamnose + H2O. Functionally, catalyzes the conversion of GDP-D-mannose to GDP-4-dehydro-6-deoxy-D-mannose. The protein is GDP-mannose 4,6-dehydratase of Vibrio cholerae serotype O1 (strain ATCC 39315 / El Tor Inaba N16961).